Reading from the N-terminus, the 157-residue chain is Protein EOLA1 (157 aa).

The 87-residue stretch at 6–92 (LSFRQPYAGL…IAGLIDIGET (87 aa)) folds into the ASCH domain.

It belongs to the EOLA family. In terms of assembly, interacts with MT2A.

May play a role in cell protection during the inflammatory response. In epithelial cells, negatively regulates IL6 production and apoptosis through the regulation of MT2A expression. The sequence is that of Protein EOLA1 from Mus musculus (Mouse).